A 582-amino-acid polypeptide reads, in one-letter code: MTQINFNASYTSASTPSRASFDNSYSEFCDKQPNDYLSYYNHPTPDGADTVISDSETAAASNFLASVNSLTDNDLVECLLKTTDNLEEAVSSAYYSESLEQPVVEQPSPSSAYHAESFEHSAGVNQPSATGTKRKLDEYLDNSQGVVGQFNKIKLRPKYKKSTIQSCATLEQTINHNTNICTVASTQEITHYFTNDFAPYLMRFDDNDYNSNRFSDHMSETGYYMFVVKKSEVKPFEIIFAKYVSNVVYEYTNNYYMVDNRVFVVTFDKIRFMISYNLVKETGIEIPHSQDVCNDETAAQNCKKCHFVDVHHTFKAALTSYFNLDMYYAQTTFVTLLQSLGERKCGFLLSKLYEMYQDKNLFTLPIMLSRKESNEIETASNNFFVSPYVSQILKYSESVQFPDNPPNKYVVDNLNLIVNKKSTLTYKYSSVANLLFNNYKYHDNIASNNNAENLKKVKKEDGSMHIVEQYLTQNVDNVKGHNFIVLSFKNEERLTIAKKNKEFYWISGEIKDVDVSQVIQKYNRFKHHMFVIGKVNRRESTTLHNNLLKLLALILQGLVPLSDAITFAEQKLNCKYKKFEFN.

The interval 101–131 (QPVVEQPSPSSAYHAESFEHSAGVNQPSATG) is disordered.

The protein belongs to the nucleopolyhedrovirus IE-1 protein family. In terms of assembly, homodimer. Interacts with helicase and LEF-3. Phosphorylated.

Its subcellular location is the host nucleus. Regulatory transcriptional protein, which trans-activates gene expression from early baculovirus promoters. Can also trans-activate its own promoter, suggesting an autoregulation during infection of host cells. Also promotes viral DNA genome replication via the N-terminal region. The protein is Trans-activating transcriptional regulatory protein (IE1) of Autographa californica nuclear polyhedrosis virus (AcMNPV).